Consider the following 284-residue polypeptide: 4-diphosphocytidyl-2-C-methyl-D-erythritol kinase (284 aa).

Residue Lys13 is part of the active site. ATP is bound at residue 96–106; the sequence is PMGGGLGGGSS. The active site involves Asp138.

This sequence belongs to the GHMP kinase family. IspE subfamily.

It catalyses the reaction 4-CDP-2-C-methyl-D-erythritol + ATP = 4-CDP-2-C-methyl-D-erythritol 2-phosphate + ADP + H(+). Its pathway is isoprenoid biosynthesis; isopentenyl diphosphate biosynthesis via DXP pathway; isopentenyl diphosphate from 1-deoxy-D-xylulose 5-phosphate: step 3/6. Catalyzes the phosphorylation of the position 2 hydroxy group of 4-diphosphocytidyl-2C-methyl-D-erythritol. The sequence is that of 4-diphosphocytidyl-2-C-methyl-D-erythritol kinase from Chromobacterium violaceum (strain ATCC 12472 / DSM 30191 / JCM 1249 / CCUG 213 / NBRC 12614 / NCIMB 9131 / NCTC 9757 / MK).